Reading from the N-terminus, the 892-residue chain is Alanine--tRNA ligase (892 aa).

Residues H596, H600, C700, and H704 each contribute to the Zn(2+) site.

This sequence belongs to the class-II aminoacyl-tRNA synthetase family. It depends on Zn(2+) as a cofactor.

It is found in the cytoplasm. It catalyses the reaction tRNA(Ala) + L-alanine + ATP = L-alanyl-tRNA(Ala) + AMP + diphosphate. Catalyzes the attachment of alanine to tRNA(Ala) in a two-step reaction: alanine is first activated by ATP to form Ala-AMP and then transferred to the acceptor end of tRNA(Ala). Also edits incorrectly charged Ser-tRNA(Ala) and Gly-tRNA(Ala) via its editing domain. The sequence is that of Alanine--tRNA ligase from Methanococcus maripaludis (strain DSM 14266 / JCM 13030 / NBRC 101832 / S2 / LL).